The sequence spans 89 residues: MNESRRFLVSGTVQGVFFRSSAKRHAEQLGLSGYARNLVDGRVEVLAHGPTDALDELAKWLEEGPPNAQVTGVEVSAVGEQPPEGFRVL.

The Acylphosphatase-like domain maps to 4–89 (SRRFLVSGTV…EQPPEGFRVL (86 aa)). Active-site residues include Arg19 and Asn37.

This sequence belongs to the acylphosphatase family.

It carries out the reaction an acyl phosphate + H2O = a carboxylate + phosphate + H(+). This chain is Acylphosphatase (acyP), found in Alkalilimnicola ehrlichii (strain ATCC BAA-1101 / DSM 17681 / MLHE-1).